A 152-amino-acid polypeptide reads, in one-letter code: uncharacterized protein (152 aa).

This is an uncharacterized protein from Mycobacterium tuberculosis (strain ATCC 25618 / H37Rv).